Reading from the N-terminus, the 46-residue chain is Esculentin-1a/b (46 aa).

Cys40 and Cys46 are disulfide-bonded.

Belongs to the frog skin active peptide (FSAP) family. Esculentin subfamily. As to expression, expressed by the skin glands.

Its subcellular location is the secreted. In terms of biological role, antimicrobial peptide. Stimulates insulin secretion by BRIN-BD11 cells in vitro. Shows hemolytic activity. In Pelophylax ridibundus (Marsh frog), this protein is Esculentin-1a/b.